The primary structure comprises 327 residues: UPF0665 family protein C23C4.06c (327 aa).

This sequence belongs to the UPF0665 family.

Its subcellular location is the cytoplasm. The protein resides in the nucleus. The protein is UPF0665 family protein C23C4.06c of Schizosaccharomyces pombe (strain 972 / ATCC 24843) (Fission yeast).